The following is a 373-amino-acid chain: Transmembrane protein adipocyte-associated 1 (373 aa).

Residues N11 and N23 are each glycosylated (N-linked (GlcNAc...) asparagine). Helical transmembrane passes span 48–68, 76–96, 123–143, 151–171, 192–212, 234–254, and 265–285; these read LLLL…LPSA, SSPI…VGIA, FFLL…GHLE, VLAI…TLEI, QFWL…VILP, ILAL…FDII, and FLYF…GFFG. An N-linked (GlcNAc...) asparagine glycan is attached at N361.

This sequence belongs to the UPF0359 family. Ubiquitous, with higher levels in heart, placenta and kidney.

It localises to the membrane. The sequence is that of Transmembrane protein adipocyte-associated 1 (TPRA1) from Homo sapiens (Human).